The primary structure comprises 303 residues: tRNA pseudouridine synthase B (303 aa).

Aspartate 47 serves as the catalytic Nucleophile.

It belongs to the pseudouridine synthase TruB family. Type 1 subfamily.

It carries out the reaction uridine(55) in tRNA = pseudouridine(55) in tRNA. Responsible for synthesis of pseudouridine from uracil-55 in the psi GC loop of transfer RNAs. This chain is tRNA pseudouridine synthase B, found in Ruegeria pomeroyi (strain ATCC 700808 / DSM 15171 / DSS-3) (Silicibacter pomeroyi).